The sequence spans 473 residues: UDP-N-acetylmuramate--L-alanine ligase (473 aa).

Residue 123–129 coordinates ATP; the sequence is GSHGKTS.

Belongs to the MurCDEF family.

Its subcellular location is the cytoplasm. The enzyme catalyses UDP-N-acetyl-alpha-D-muramate + L-alanine + ATP = UDP-N-acetyl-alpha-D-muramoyl-L-alanine + ADP + phosphate + H(+). It participates in cell wall biogenesis; peptidoglycan biosynthesis. Its function is as follows. Cell wall formation. The sequence is that of UDP-N-acetylmuramate--L-alanine ligase from Prochlorococcus marinus subsp. pastoris (strain CCMP1986 / NIES-2087 / MED4).